We begin with the raw amino-acid sequence, 751 residues long: Semaphorin-3C (751 aa).

An N-terminal signal peptide occupies residues 1–21; the sequence is MAVLALHAVFGIFIYFSSVKG. In terms of domain architecture, Sema spans 28–511; the sequence is RVFLTFNELQ…SEEGVTQVPL (484 aa). Asparagine 81 carries N-linked (GlcNAc...) asparagine glycosylation. Cysteine 101 and cysteine 112 are disulfide-bonded. An N-linked (GlcNAc...) asparagine glycan is attached at asparagine 123. 3 cysteine pairs are disulfide-bonded: cysteine 130–cysteine 139, cysteine 266–cysteine 378, and cysteine 290–cysteine 338. N-linked (GlcNAc...) asparagine glycosylation is present at asparagine 268. N-linked (GlcNAc...) asparagine glycosylation is present at asparagine 465. Residues cysteine 514 and cysteine 532 are joined by a disulfide bond. The 85-residue stretch at 571–655 folds into the Ig-like C2-type domain; sequence AYRNAAETVQ…TENNFKQTLA (85 aa). N-linked (GlcNAc...) asparagine glycosylation is found at asparagine 585 and asparagine 586. A disulfide bridge connects residues cysteine 643 and cysteine 709. Residues 712–731 are compositionally biased toward basic and acidic residues; the sequence is SRQQGQRREEPQKMRGDYSK. The segment at 712–751 is disordered; sequence SRQQGQRREEPQKMRGDYSKLKALINSRKSRNRRNQLPAS.

The protein belongs to the semaphorin family. In terms of tissue distribution, collapsin-1, -2, -3, and -5 bind to overlapping but distinct axon tracts.

The protein localises to the secreted. Functionally, induces the collapse and paralysis of neuronal growth cones. Could potentially act as repulsive cues toward specific neuronal populations. Binds to neuropilin. This is Semaphorin-3C (SEMA3C) from Gallus gallus (Chicken).